A 684-amino-acid polypeptide reads, in one-letter code: MDTSKKDTTRSPSHSNSSSPSSSSLSSSSSKEKKRPKRLSSQNVNYDLKRRKIITSEGIERSFKNEHSNLAVEDNIPEEEPKELLEKDSKGNIIKLNEPSTISEDSKVSVTGLPLNKGPSEKIKRESLWNYRKNLGGQSNNSEMTLVPSKRFTQVPKNFQDLNRNDLKTFLTENMTEESNIRSTIGWNGDIINRTRDREPESDRDNKKLSNIRTKIILSTNATYDSKSKLFGQNSIKSTSNASEKIFRDKNNSTIDFENEDFCSACNQSGSFLCCDTCPKSFHFLCLDPPIDPNNLPKGDWHCNECKFKIFINNSMATLKKIESNFIKQNNNVKIFAKLLFNIDSHNPKQFQLPNYIKETFPAVKTGSRGQYSDENDKIPLTDRQLFNTSYGQSITKLDSYNPDTHIDSNSGKFLICYKCNQTRLGSWSHPENSRLIMTCDYCQTPWHLDCVPRASFKNLGSKWKCPLHSPTKVYKKIHHCQEDNSVNYKVWKKQRLINKKNQLYYEPLQKIGYQNNGNIQIIPTTSHTDYDFNQDFKITQIDENSIKYDFFDKIYKSKMVQKRKLFQFQESLIDKLVSNGSQNGNSEDNMVKDIASLIYFQVSNNDKSSNNKSASKSNNLRKLWDLKELTNVVVPNELDSIQFNDFSSDEIKHLLYLKKIIESKPKEELLKFLNIENPENQSE.

M1 carries the post-translational modification N-acetylmethionine. The tract at residues 1-48 (MDTSKKDTTRSPSHSNSSSPSSSSLSSSSSKEKKRPKRLSSQNVNYDL) is disordered. A compositionally biased stretch (low complexity) spans 10–29 (RSPSHSNSSSPSSSSLSSSS). A Phosphoserine modification is found at S68. The PHD-type 1 zinc finger occupies 260 to 309 (EDFCSACNQSGSFLCCDTCPKSFHFLCLDPPIDPNNLPKGDWHCNECKFK). A PHD-type 2; atypical zinc finger spans residues 414–472 (FLICYKCNQTRLGSWSHPENSRLIMTCDYCQTPWHLDCVPRASFKNLGSKWKCPLHSPT). S683 bears the Phosphoserine mark.

Component of the RPD3C(S) complex composed of at least EAF3, RCO1, RPD3, SIN3, and UME1.

It is found in the nucleus. In terms of biological role, catalytic component of the RPD3C(S) histone deacetylase complex responsible for the deacetylation of lysine residues on the N-terminal part of the core histones (H2A, H2B, H3 and H4). Histone deacetylation gives a tag for epigenetic repression and plays an important role in transcriptional regulation, cell cycle progression, DNA damage response, osmotic stress response and developmental events. The chain is Transcriptional regulatory protein RCO1 (RCO1) from Saccharomyces cerevisiae (strain ATCC 204508 / S288c) (Baker's yeast).